Consider the following 123-residue polypeptide: Small ribosomal subunit protein uS12 (123 aa).

A 3-methylthioaspartic acid modification is found at Asp-89.

The protein belongs to the universal ribosomal protein uS12 family. Part of the 30S ribosomal subunit. Contacts proteins S8 and S17. May interact with IF1 in the 30S initiation complex.

In terms of biological role, with S4 and S5 plays an important role in translational accuracy. Its function is as follows. Interacts with and stabilizes bases of the 16S rRNA that are involved in tRNA selection in the A site and with the mRNA backbone. Located at the interface of the 30S and 50S subunits, it traverses the body of the 30S subunit contacting proteins on the other side and probably holding the rRNA structure together. The combined cluster of proteins S8, S12 and S17 appears to hold together the shoulder and platform of the 30S subunit. The chain is Small ribosomal subunit protein uS12 from Rhodospirillum centenum (strain ATCC 51521 / SW).